A 965-amino-acid polypeptide reads, in one-letter code: MTISQNPTLDTFKGLFNEAEFVYRHLGSNDAKQADLLSAIGYKDMATFINDTVPEPVRLHKELDLPVAMSEHAALAKLRTMADDITVNKSYIGQGYSPVRMPAVIQRNVLENPGWYTAYTPYQAEIAQGRLEALLNFQQVCIDLTGLELAGASLLDEATAAAEAMAMSKRVSKSKSMQFFVDDRVYSQTLDVINTRAKYFGWEVVVGDFELAKSGDYFGALFQYVGVEGDVKDLTDVIAAVKKNKTYVNVVSDIMSLVLLKSPADMGADVALGSTQRFGIPMGFGGPHAAYFAFSDKAKRSAPGRIIGVSKDSQGNTALRMALQTREQHIRREKANSNICTSQVLLANLAGMYAVYHGPGGVKRIATRIHAFATAFADVIKNANDSNLNVVHDQFFDSVVIDCGSEKLATQIFENADNVGYNLWRLGDSKLSVAFSETSDQEDFKILTQLFVTKAHDLPEDARISLDSTHLRTDDILTHPVFNSHHTEHEMLRYLKSLEDKDLAMNRSMISLGSCTMKLNATSEMLPITWPEFANVHPFAPRDQVTGYVAMIDSLQEQLKAITGFDDVSMQPNSGASGEYAGLLAIRRYHESLGETDRDVCLIPMSAHGTNPATAMMMGMKVVVVKTDDNGNVDIDDLTAKSEEHSARLGALMITYPSTHGVFEEGIRKICDLIHKHGGQVYMDGANMNAQVGMMQPADVGADVLHMNLHKTFCIPHGGGGPGMGPIGMKSHLAPFMANHTLSPVHNAQKDCSAVSAAPYGSASILPISWMYIAMMGRDGLLKATELALLNANYVAAELKDYYPVLYTGKNGRVAHECIIDIRPLKEETGISESDIAKRLMDYGFHSPTMSFPVAGTLMIEPTESESKEELDRFISALKSIKAEAMKAKAGEDNWTLENNPLVNAPHTAAMVIDGEWTYPYSRETAAFPLPYIRTNKFWPSVARVDDAYGDKNLMCSCPSIENYM.

Lys-711 carries the N6-(pyridoxal phosphate)lysine modification.

The protein belongs to the GcvP family. As to quaternary structure, the glycine cleavage system is composed of four proteins: P, T, L and H. It depends on pyridoxal 5'-phosphate as a cofactor.

The catalysed reaction is N(6)-[(R)-lipoyl]-L-lysyl-[glycine-cleavage complex H protein] + glycine + H(+) = N(6)-[(R)-S(8)-aminomethyldihydrolipoyl]-L-lysyl-[glycine-cleavage complex H protein] + CO2. The glycine cleavage system catalyzes the degradation of glycine. The P protein binds the alpha-amino group of glycine through its pyridoxal phosphate cofactor; CO(2) is released and the remaining methylamine moiety is then transferred to the lipoamide cofactor of the H protein. This chain is Glycine dehydrogenase (decarboxylating), found in Psychrobacter arcticus (strain DSM 17307 / VKM B-2377 / 273-4).